We begin with the raw amino-acid sequence, 311 residues long: Lipoyl synthase (311 aa).

Positions 55, 60, 66, 81, 85, 88, and 292 each coordinate [4Fe-4S] cluster. In terms of domain architecture, Radical SAM core spans 67 to 281 (WEDREATFLI…ARFAEGLGFA (215 aa)).

This sequence belongs to the radical SAM superfamily. Lipoyl synthase family. It depends on [4Fe-4S] cluster as a cofactor.

Its subcellular location is the cytoplasm. The enzyme catalyses [[Fe-S] cluster scaffold protein carrying a second [4Fe-4S](2+) cluster] + N(6)-octanoyl-L-lysyl-[protein] + 2 oxidized [2Fe-2S]-[ferredoxin] + 2 S-adenosyl-L-methionine + 4 H(+) = [[Fe-S] cluster scaffold protein] + N(6)-[(R)-dihydrolipoyl]-L-lysyl-[protein] + 4 Fe(3+) + 2 hydrogen sulfide + 2 5'-deoxyadenosine + 2 L-methionine + 2 reduced [2Fe-2S]-[ferredoxin]. It functions in the pathway protein modification; protein lipoylation via endogenous pathway; protein N(6)-(lipoyl)lysine from octanoyl-[acyl-carrier-protein]: step 2/2. Catalyzes the radical-mediated insertion of two sulfur atoms into the C-6 and C-8 positions of the octanoyl moiety bound to the lipoyl domains of lipoate-dependent enzymes, thereby converting the octanoylated domains into lipoylated derivatives. In Mycobacterium bovis (strain ATCC BAA-935 / AF2122/97), this protein is Lipoyl synthase.